We begin with the raw amino-acid sequence, 507 residues long: Glucose transporter type 3 (507 aa).

A disordered region spans residues 1-26 (MRKGGIQDAEPVEPPQSSRKSGTWFA). The Cytoplasmic segment spans residues 1–53 (MRKGGIQDAEPVEPPQSSRKSGTWFAKRPSEMPERHVERAPVRQKINNVGLYK). A helical membrane pass occupies residues 54-74 (ATLYSNIGSFFFGIAVGWSGT). Topologically, residues 75 to 95 (AERSVMEQHSYSFQPTELQWS) are extracellular. A helical membrane pass occupies residues 96 to 116 (GVCILLTLGAALWCLPMGLMV). Residues 117-124 (RLLGCRRT) are Cytoplasmic-facing. Residues 125 to 145 (ILIQLLPNFLGWFLTVFARSV) traverse the membrane as a helical segment. At 146–152 (PMLYAGR) the chain is on the extracellular side. Residues 153–173 (FFLGMCGGAHCVVVPIYNAEI) form a helical membrane-spanning segment. At 174–183 (STTKKRGAMG) the chain is on the cytoplasmic side. A helical membrane pass occupies residues 184–204 (VVFEGACICGVIYSFAMSLFL). The Extracellular portion of the chain corresponds to 205–207 (ELR). The helical transmembrane segment at 208–228 (IINFVNLGLLALGPLQILMPE) threads the bilayer. At 229-293 (SPAYYVDHGN…YKKVRRSLAR (65 aa)) the chain is on the cytoplasmic side. The chain crosses the membrane as a helical span at residues 294–314 (SLAIALLQKLCGALIFIFYGL). The Extracellular portion of the chain corresponds to 315-324 (NMLDCLRIRR). Residues 325 to 345 (EFGLILCLGLILGFLACFFLV) form a helical membrane-spanning segment. At 346–351 (DRLGRR) the chain is on the cytoplasmic side. Residues 352–372 (PLLIFSSAGIVFVSIYLGLHF) form a helical membrane-spanning segment. At 373 to 374 (KV) the chain is on the extracellular side. The chain crosses the membrane as a helical span at residues 375–395 (WMTMGLTVMSWIALFCIAIFV). Residues 396–420 (GCYTAGVGSLTWVLNAELLVRPMRP) lie on the Cytoplasmic side of the membrane. The helical transmembrane segment at 421 to 441 (LGCSIVCAFNWLTAFFVICWF) threads the bilayer. The Extracellular segment spans residues 442-450 (GSHGVKCQP). Residues 451-471 (YLFLLFAIIASLILLFSLIYI) traverse the membrane as a helical segment. Residues 472–507 (PETKKLSSAKIQQRLGGLINRPAVITFTSSSDSSNA) lie on the Cytoplasmic side of the membrane.

The protein belongs to the major facilitator superfamily. Sugar transporter (TC 2.A.1.1) family. Glucose transporter subfamily.

The protein resides in the cell membrane. It localises to the perikaryon. It is found in the cell projection. Facilitative glucose transporter that can also mediate the uptake of various other monosaccharides across the cell membrane. This chain is Glucose transporter type 3 (Glut3), found in Drosophila melanogaster (Fruit fly).